Consider the following 714-residue polypeptide: Angiogenic factor with G patch and FHA domains 1 (714 aa).

Residues Met1–Pro18 are compositionally biased toward pro residues. Disordered stretches follow at residues Met1–Leu22, Gln259–Cys307, and Ile322–Glu384. Position 2 is an N-acetylalanine (Ala2). Phosphoserine occurs at positions 7 and 11. Residues Pro18 to Lys88 are a coiled coil. Residues Lys279–Lys298 are compositionally biased toward basic and acidic residues. Polar residues predominate over residues Val335–Ser355. At Ser344 the chain carries Phosphoserine. Residues Thr364–Asp383 are compositionally biased toward acidic residues. Positions Ala434–Ile487 constitute an FHA domain. Residues Lys586–Ala609 are compositionally biased toward basic and acidic residues. Disordered regions lie at residues Lys586 to Ile617 and Arg655 to Glu714. A G-patch domain is found at Asp619 to Pro665. Position 664 is an N6-acetyllysine (Lys664). Over residues Lys680 to Thr690 the composition is skewed to basic and acidic residues.

In terms of assembly, interacts with the secreted angiogenic factor TNFSF12. As to expression, widely expressed. Expressed in endothelial cells, vascular smooth muscle cells and osteoblasts. Expressed in umbilical vein endothelial cells and microvascular endothelial cells.

Its subcellular location is the cytoplasm. The protein resides in the secreted. Functionally, promotes angiogenesis and the proliferation of endothelial cells. Able to bind to endothelial cells and promote cell proliferation, suggesting that it may act in an autocrine fashion. This Homo sapiens (Human) protein is Angiogenic factor with G patch and FHA domains 1 (AGGF1).